Here is a 1161-residue protein sequence, read N- to C-terminus: Lysine-specific demethylase 2A (1161 aa).

Ser-28 is subject to Phosphoserine. Residues 148–316 enclose the JmjC domain; sequence FSHTRLENMV…MQLKIYSIED (169 aa). Thr-209 provides a ligand contact to substrate. Residues His-212 and Asp-214 each coordinate Fe cation. Lys-229 lines the substrate pocket. Residue His-284 coordinates Fe cation. A phosphoserine mark is found at Ser-390 and Ser-394. The span at 419 to 433 shows a compositional bias: low complexity; sequence KTLSGDSSSDSTRGS. A disordered region spans residues 419 to 445; the sequence is KTLSGDSSSDSTRGSHNGQVWDPQCSP. The residue at position 444 (Ser-444) is a Phosphoserine. Lys-505 is covalently cross-linked (Glycyl lysine isopeptide (Lys-Gly) (interchain with G-Cter in SUMO2)). A disordered region spans residues 532-557; that stretch reads VPTIPITKPHTMKPAPRLTPVRPAAA. Thr-550 carries the phosphothreonine modification. Phosphoserine is present on Ser-558. The segment at 564-610 adopts a CXXC-type zinc-finger fold; it reads ARRRRVRCRKCKACVQGECGVCHYCRDMKKFGGPGRMKQSCVLRQCL. Zn(2+)-binding residues include Cys-571, Cys-574, Cys-577, Cys-582, Cys-585, Cys-588, Cys-604, Cys-609, Cys-620, and Cys-623. The PHD-type zinc finger occupies 617–678; it reads SVTCSLCGEV…CWECPKCYQE (62 aa). Thr-632 carries the post-translational modification Phosphothreonine. Zn(2+) contacts are provided by Cys-642, Cys-645, His-650, Cys-653, Cys-672, and Cys-675. The residue at position 692 (Ser-692) is a Phosphoserine. The tract at residues 705-789 is disordered; the sequence is LRSCEEPLTP…PSGKKELSEV (85 aa). Thr-713 is subject to Phosphothreonine. Ser-718 and Ser-731 each carry phosphoserine. Basic and acidic residues-rich tracts occupy residues 746 to 757 and 771 to 789; these read SDHHSASRDERF and TMVR…LSEV. 3 positions are modified to phosphoserine: Ser-825, Ser-868, and Ser-882. Residues 840-886 are disordered; that stretch reads CPARNPQHGDEEGLGGEEEEEEEEEEDDSAEEGGAARLNGRGSWAQD. The span at 851–870 shows a compositional bias: acidic residues; that stretch reads EGLGGEEEEEEEEEEDDSAE. In terms of domain architecture, F-box spans 888 to 935; sequence DESWMQREVWMSVFRYLSRKELCECMRVCKTWYKWCCDKRLWTKIDLS. LRR repeat units lie at residues 960–981 and 983–1009; these read WTNI…LKDL and LAGC…DLRW. Position 1019 is an ADP-ribosylarginine (Arg-1019). LRR repeat units follow at residues 1047 to 1072, 1073 to 1102, 1103 to 1127, and 1128 to 1155; these read GLDI…DLSH, CSHL…NMAG, CNKL…DLRG, and CKQI…SDEK.

Belongs to the JHDM1 histone demethylase family. As to quaternary structure, part of a SCF (SKP1-cullin-F-box) protein ligase complex. Interacts with CBX5/HP1A; the interaction promotes CBX5 localization to chromatin. The SKP1-KDM2A complex interacts with UBB. It depends on Fe(2+) as a cofactor. Mono-ADP-ribosylated at Arg-1019 in response to DNA damage, leading to displacement from chromatin, resulting in increased dimethylation of histone H3 at 'Lys-36'.

It is found in the nucleus. The protein localises to the nucleoplasm. The protein resides in the chromosome. The catalysed reaction is N(6),N(6)-dimethyl-L-lysyl(36)-[histone H3] + 2 2-oxoglutarate + 2 O2 = L-lysyl(36)-[histone H3] + 2 formaldehyde + 2 succinate + 2 CO2. Functionally, histone demethylase that specifically demethylates 'Lys-36' of histone H3, thereby playing a central role in histone code. Preferentially demethylates dimethylated H3 'Lys-36' residue while it has weak or no activity for mono- and tri-methylated H3 'Lys-36'. May also recognize and bind to some phosphorylated proteins and promote their ubiquitination and degradation. Required to maintain the heterochromatic state. Associates with centromeres and represses transcription of small non-coding RNAs that are encoded by the clusters of satellite repeats at the centromere. Required to sustain centromeric integrity and genomic stability, particularly during mitosis. Regulates circadian gene expression by repressing the transcriptional activator activity of CLOCK-BMAL1 heterodimer and RORA in a catalytically-independent manner. This Mus musculus (Mouse) protein is Lysine-specific demethylase 2A (Kdm2a).